A 386-amino-acid chain; its full sequence is Probable pectin lyase E (386 aa).

The signal sequence occupies residues Met1 to Ala16. Residues Cys77 and Cys101 are joined by a disulfide bond. Asn124 carries N-linked (GlcNAc...) asparagine glycosylation. Arg251 is a catalytic residue. Cys326 and Cys334 are joined by a disulfide.

This sequence belongs to the polysaccharide lyase 1 family.

The protein localises to the secreted. It carries out the reaction Eliminative cleavage of (1-&gt;4)-alpha-D-galacturonan methyl ester to give oligosaccharides with 4-deoxy-6-O-methyl-alpha-D-galact-4-enuronosyl groups at their non-reducing ends.. Its function is as follows. Pectinolytic enzymes consist of four classes of enzymes: pectin lyase, polygalacturonase, pectin methylesterase and rhamnogalacturonase. Among pectinolytic enzymes, pectin lyase is the most important in depolymerization of pectin, since it cleaves internal glycosidic bonds of highly methylated pectins. This Aspergillus fumigatus (strain CBS 144.89 / FGSC A1163 / CEA10) (Neosartorya fumigata) protein is Probable pectin lyase E (pelE).